Reading from the N-terminus, the 682-residue chain is Heat shock 70 kDa protein 10, mitochondrial (682 aa).

Residues 1-50 (MATAALLRSIRRREVVSSPFSAYRCLSSSGKASLNSSYLGQNFRSFSRAF) constitute a mitochondrion transit peptide. The disordered stretch occupies residues 646–682 (KIGEHMSGGSGGGSAPGGGSEGGSDQAPEAEYEEVKK). Gly residues predominate over residues 651–667 (MSGGSGGGSAPGGGSEG). Acidic residues predominate over residues 673-682 (PEAEYEEVKK).

Belongs to the heat shock protein 70 (TC 1.A.33) family. DnaK subfamily.

The protein localises to the mitochondrion. Chaperone involved in the maturation of iron-sulfur [Fe-S] cluster-containing proteins. Has a low intrinsic ATPase activity which is markedly stimulated by HSCB and ISU1. In cooperation with other chaperones, Hsp70s are key components that facilitate folding of de novo synthesized proteins, assist translocation of precursor proteins into organelles, and are responsible for degradation of damaged protein under stress conditions. The polypeptide is Heat shock 70 kDa protein 10, mitochondrial (Arabidopsis thaliana (Mouse-ear cress)).